The chain runs to 200 residues: Ras-related protein RABF2b (200 aa).

17–25 provides a ligand contact to GTP; it reads GDVGAGKSS. Positions 39–47 match the Effector region motif; it reads QESTIGAAF. GTP is bound by residues 65–69, 123–126, and 153–154; these read DTAGQ, NKSD, and SA. S-geranylgeranyl cysteine attachment occurs at residues Cys-198 and Cys-199.

Belongs to the small GTPase superfamily. Rab family. Interacts with VPS9A homodimer. Interacts with TCTP1. Interacts with MON1. Interacts with EREX (via PX domain). Binds to VPS3. In terms of tissue distribution, expressed in roots and actively dividing cells.

It is found in the early endosome membrane. It localises to the endosome membrane. Its subcellular location is the prevacuolar compartment membrane. The protein resides in the endosome. The protein localises to the multivesicular body membrane. It is found in the cell membrane. It localises to the cytoplasm. Regulated by guanine nucleotide exchange factors (GEFs) which promote the exchange of bound GDP for free GTP. In terms of biological role, endosomal protein that may be involved in endocytosis. Involved in the trafficking of proteins from prevacuolar compartments (PVCs) to vacuoles. May activate the MON1-CCZ1 complex which acts as guanine nucleotide exchange factors (GEF) for Rab7 protein family, and serves as a link between Rab5 and Rab7 families in PVCs, and mediates PVC maturation. Involved in vacuolar transport of storage proteins with EREX as effector. Regulates membrane trafficking to protein storage vacuoles (PSVs). The polypeptide is Ras-related protein RABF2b (Arabidopsis thaliana (Mouse-ear cress)).